The primary structure comprises 141 residues: Flagellar assembly factor FliW (141 aa).

The protein belongs to the FliW family. As to quaternary structure, interacts with translational regulator CsrA and flagellin(s).

It localises to the cytoplasm. In terms of biological role, acts as an anti-CsrA protein, binds CsrA and prevents it from repressing translation of its target genes, one of which is flagellin. Binds to flagellin and participates in the assembly of the flagellum. The sequence is that of Flagellar assembly factor FliW from Clostridium beijerinckii (strain ATCC 51743 / NCIMB 8052) (Clostridium acetobutylicum).